The sequence spans 313 residues: 4-diphosphocytidyl-2-C-methyl-D-erythritol kinase (313 aa).

Residue Lys10 is part of the active site. An ATP-binding site is contributed by 95 to 105 (PVTAGLGGGSS). Asp136 is an active-site residue. The interval 289 to 313 (HPRVSPWRSPRSASSRSTRRSSRPT) is disordered. Residues 292 to 304 (VSPWRSPRSASSR) are compositionally biased toward low complexity.

The protein belongs to the GHMP kinase family. IspE subfamily.

It catalyses the reaction 4-CDP-2-C-methyl-D-erythritol + ATP = 4-CDP-2-C-methyl-D-erythritol 2-phosphate + ADP + H(+). It participates in isoprenoid biosynthesis; isopentenyl diphosphate biosynthesis via DXP pathway; isopentenyl diphosphate from 1-deoxy-D-xylulose 5-phosphate: step 3/6. In terms of biological role, catalyzes the phosphorylation of the position 2 hydroxy group of 4-diphosphocytidyl-2C-methyl-D-erythritol. The polypeptide is 4-diphosphocytidyl-2-C-methyl-D-erythritol kinase (Anaeromyxobacter sp. (strain K)).